Reading from the N-terminus, the 433-residue chain is GTPase Obg (433 aa).

One can recognise an Obg domain in the interval 1–159 (MAITDYCECR…LNVSLEVKYL (159 aa)). The OBG-type G domain occupies 160–329 (ANVGIVGFPN…LLDRVFELYN (170 aa)). GTP is bound by residues 166 to 173 (GFPNSGKS), 191 to 195 (FTTLI), 212 to 215 (DIPG), 282 to 285 (NKID), and 310 to 312 (ISA). Mg(2+) contacts are provided by S173 and T193. Residues 355–433 (TNENNNDPLN…FDGCEFVIND (79 aa)) enclose the OCT domain.

The protein belongs to the TRAFAC class OBG-HflX-like GTPase superfamily. OBG GTPase family. Monomer. It depends on Mg(2+) as a cofactor.

It localises to the cytoplasm. Functionally, an essential GTPase which binds GTP, GDP and possibly (p)ppGpp with moderate affinity, with high nucleotide exchange rates and a fairly low GTP hydrolysis rate. Plays a role in control of the cell cycle, stress response, ribosome biogenesis and in those bacteria that undergo differentiation, in morphogenesis control. In Mycoplasma genitalium (strain ATCC 33530 / DSM 19775 / NCTC 10195 / G37) (Mycoplasmoides genitalium), this protein is GTPase Obg.